The sequence spans 832 residues: MKDSQSDIIELCNKLNEATKLKRNGKSIKLTNFVSNTQIKLDSWKFLEWDYGKPSVQLPIQARGLFTLNNDTIAVRGYDKFFNVEEKPFTKETNLKTSTHGPYEVTLKENGCIIFISGLSTGDIVVCSKHSTGDRIDDNESDKTTTATATATAPTRNHAKQGEFELLQQFDGDQQKVKQLAHYLYENNLTVVAELCDDEFEEHVLPYPKDKSGLYVHGLNYNTITFKTLPMDQVLQFAKEWGFKYVSYLTYDNADELFKFLHKCSETGTYNGREIEGFVIRCHRQSHTNGDTDGDCFFFKYKFEQPYLLYRQFREVTKQLLNGTPINSIKIKKNKPITKKYLQFVEKLFEQEPEIARNFENGFDIIKVRQLFLQSLNETNGMNLLSIDSELSDQLKNLALANGNEGLSTTTKYIFVPIATIGCGKTTVFNTLNNLFPQWTHIQNDNISKKAKLKICDLTLLALEDDDQSVVLFDRNNSASRERRQIFTTIDQKRDEHLDDTVDLKYIAINFIPEDLSEEELWDITYNRVIQRGDNHQSIKSQSDENLVESVMKGFIQRYQPINTSRSPDDQFDHVIHLKLSKDENSSKSSLENVRIIIDDLVQNFPDLIKEKPADELINECFQKALDYKPTFVKNMTANTIKKDPTYYGIAMHYSSILENLEIVSHNEHFQNIKSHIQTEFHVTLGHIASSKQDKAGRVKWKKLVKTLGKGDPNKPKSALKFFADVKLLQIVINTDKLACIKVEILKIYDTNDVLQSEIEPINKQLHITIGCIPPATAVESNITLEELYDNPDEQELKPDGTYKCGDDTLHVFNFDNPDLKLFSQQLFVAYQ.

Lys-108 functions as the N6-AMP-lysine intermediate in the catalytic mechanism.

The protein belongs to the TRL1 family.

The enzyme catalyses ATP + (ribonucleotide)n-3'-hydroxyl + 5'-phospho-(ribonucleotide)m = (ribonucleotide)n+m + AMP + diphosphate.. One of the two proteins required for the splicing of precursor tRNA molecules containing introns. The ligation activity requires three enzymatic activities: phosphorylation of the 5' terminus of the 3' half-tRNA in the presence of ATP, opening of the 2'3'-cyclic phosphodiester bond of the 5' half-tRNA leaving a 2'-phosphomonoester and ligation of the two tRNA halves in an ATP-dependent reaction. The sequence is that of tRNA ligase (LIG1) from Candida albicans (strain SC5314 / ATCC MYA-2876) (Yeast).